A 585-amino-acid chain; its full sequence is Probable inactive serine/threonine-protein kinase slob1 (585 aa).

Residues 21–82 form an FYVE-type zinc finger; the sequence is DQSSLECNDC…LCRSCNNSFE (62 aa). Zn(2+) is bound by residues C27, C30, C43, C46, C51, C54, C74, and C77. In terms of domain architecture, Protein kinase spans 108 to 478; the sequence is SKPLQDIGHT…STSLLNNSFN (371 aa). Composition is skewed to low complexity over residues 426–456 and 466–503; these read ISKLSSSSSNNNSNNNNNNNNNSNTFNNISS and LPSSTSLLNNSFNLSNNNNPSSPSTSTISPNSSLISSP. The disordered stretch occupies residues 426-585; the sequence is ISKLSSSSSN…SLKPSSTKKK (160 aa). The segment covering 513–532 has biased composition (pro residues); sequence TPPPPPPPPKSAPPPPPPPS. The segment covering 533 to 542 has biased composition (low complexity); the sequence is SSKLPPSSSS. One can recognise a WH2 domain in the interval 542 to 562; the sequence is SRNSLLESIRNADNAKKLKKT.

It belongs to the protein kinase superfamily. Ser/Thr protein kinase family.

This is Probable inactive serine/threonine-protein kinase slob1 (slob1) from Dictyostelium discoideum (Social amoeba).